Here is a 141-residue protein sequence, read N- to C-terminus: Nucleoside diphosphate kinase (141 aa).

6 residues coordinate ATP: Lys-10, Phe-58, Arg-86, Thr-92, Arg-103, and Asn-113. Residue His-116 is the Pros-phosphohistidine intermediate of the active site.

It belongs to the NDK family. In terms of assembly, homotetramer. It depends on Mg(2+) as a cofactor.

The protein resides in the cytoplasm. The catalysed reaction is a 2'-deoxyribonucleoside 5'-diphosphate + ATP = a 2'-deoxyribonucleoside 5'-triphosphate + ADP. The enzyme catalyses a ribonucleoside 5'-diphosphate + ATP = a ribonucleoside 5'-triphosphate + ADP. Major role in the synthesis of nucleoside triphosphates other than ATP. The ATP gamma phosphate is transferred to the NDP beta phosphate via a ping-pong mechanism, using a phosphorylated active-site intermediate. The polypeptide is Nucleoside diphosphate kinase (Hydrogenovibrio crunogenus (strain DSM 25203 / XCL-2) (Thiomicrospira crunogena)).